We begin with the raw amino-acid sequence, 320 residues long: Cytochrome f (320 aa).

A signal peptide spans 1–35 (MENRNTFSWVKEQMTRSISVSIMIYVITRTSISNA). Positions 36, 56, 59, and 60 each coordinate heme. The helical transmembrane segment at 286 to 306 (VQGLLFFFASVILAQVFLVLK) threads the bilayer.

It belongs to the cytochrome f family. As to quaternary structure, the 4 large subunits of the cytochrome b6-f complex are cytochrome b6, subunit IV (17 kDa polypeptide, petD), cytochrome f and the Rieske protein, while the 4 small subunits are PetG, PetL, PetM and PetN. The complex functions as a dimer. Heme is required as a cofactor.

Its subcellular location is the plastid. The protein resides in the chloroplast thylakoid membrane. Its function is as follows. Component of the cytochrome b6-f complex, which mediates electron transfer between photosystem II (PSII) and photosystem I (PSI), cyclic electron flow around PSI, and state transitions. This Oryza nivara (Indian wild rice) protein is Cytochrome f.